Consider the following 1171-residue polypeptide: MPKQTLDGNTAAAHVAYAMSEVATIYPITPSSPMAEIADEWAAHGRKNIFGKTLQVAEMQSEAGAAGAVHGSLAAGALTTTFTASQGLLLMIPNMYKIAGELLPCVFHVAARALSTHALSIFGDHADVMAARQTGFAMLSSASVQEVMDLALVAHLATLKARVPFVHFFDGFRTSHEVQKIDVIEYEDMAKLVDWDAIRAFRQRALNPEHPHQRGTAQNPDIYFQSREAANPYYLATPGIVAQVMEQVAGLTGRHYHLFDYAGAPDAERVIVSMGSSCEVIEETVNYLVEKGEKVGLIKVRLFRPFSAEHFLKVLPASVKRIAVLDRTKEPGSLGEPLYEDVQTVLAEHGKNILVVGGRYGLGSKEFNPSMVKAVFDNLAATTPKNKFTVGITDDVTHTSLEIKEHIDTSPKGTFRCKFFGLGSDGTVGANKNSIKIIGDHTDMYAQGYFVYDSKKSGGVTISHLRFGKQPIQSAYLIDQADLIACHNPSYVGRYNLLEGIKPGGIFLLNSTWSAEEMDSRLPADMKRTIATKKLKFYNIDAVKIAQEIGLGSRINVIMQTAFFKIANVIPVDEAIKYIKDSIVKTYGKKGDKILNMNFAAVDRALEALEEIKYPASWADAVDEAAATVTEEPEFIQKVLRPINALKGDELPVSTFTPDGVFPVGTTKYEKRGIAVNIPQWQPENCIQCNQCSLVCPHAAIRPYLAKPADLAGAPETFVTKDAIGKEAAGLKFRIQVSPLDCTGCGNCADVCPAKVKALTMVPLEEVTAVEEANYNFAEQLPEVKVNFNPATVKGSQFRQPLLEFSGACAGCGETPYVKLVTQLFGDRMIIANATGCSSIWGGSAPACPYTVNRQGHGPAWASSLFEDNAEFGYGMALAVAKRQDELATAISKALEAPVSAAFKAACEGWLAGKDDADRSREYGDRIKALLPGEISQASGEVKDLLLDIDRQKDYLTKKSIWIIGGDGWAYDIGYGGLDHVLASGANVNVLVLDTEVYSNTGGQSSKATQTGAVARFAAGGKFTKKKDLGLMAMSYGYVYVASVAMGASHSQLMKALIEAEKYDGPSLIIAYAPCINHGINMTYSQREAKKAVEAGYWPLYRYNPQLAQEGKNPFILDYKTPTASFRDFLMGEIRYTSLKKQFPEKAEQLFAKAEADAKARLEQYKKLAEG.

Pyruvate-binding residues include Thr-29 and Arg-112. Residues 424–428 (SDGTV), Lys-456, Asn-556, and Asn-598 each bind CoA. 4Fe-4S ferredoxin-type domains lie at 677–706 (NIPQ…PYLA) and 733–764 (FRIQ…MVPL). The [4Fe-4S] cluster site is built by Cys-686, Cys-689, Cys-692, Cys-696, Cys-742, Cys-745, Cys-748, Cys-752, Cys-809, and Cys-812. Residues Glu-814, Cys-837, 967 to 969 (DGW), and 995 to 1000 (TEVYSN) each bind thiamine diphosphate. Cys-837 contributes to the [4Fe-4S] cluster binding site. Mg(2+)-binding residues include Asp-967, Thr-995, and Val-997. Asn-1000 lines the pyruvate pocket. [4Fe-4S] cluster is bound at residue Cys-1075.

The protein belongs to the pyruvate:ferredoxin/flavodoxin oxidoreductase family. Homodimer. [4Fe-4S] cluster serves as cofactor. The cofactor is thiamine diphosphate. Mg(2+) is required as a cofactor.

The catalysed reaction is 2 oxidized [2Fe-2S]-[ferredoxin] + pyruvate + CoA = 2 reduced [2Fe-2S]-[ferredoxin] + acetyl-CoA + CO2 + H(+). Catalyzes the oxidative decarboxylation of pyruvate to acetyl-CoA and carbon dioxide. The two electrons that are generated as a result of pyruvate decarboxylation are used in the reduction of low potential ferredoxins, which provide reducing equivalents for central metabolism. Also catalyzes the reverse reaction, i.e. the synthesis of pyruvate from acetyl-CoA and carbon dioxide. Appears to function physiologically in both directions. The oxidation of pyruvate by PFOR is required to connect glycolysis and the Wood-Ljungdahl pathway of reductive acetogenesis. The conversion of acetyl-CoA to pyruvate links the Wood-Ljungdahl pathway of autotrophic CO2 fixation to the reductive tricarboxylic acid cycle. Can use methyl viologen as electron carrier in vitro. The protein is Pyruvate:ferredoxin oxidoreductase of Moorella thermoacetica (strain ATCC 39073 / JCM 9320).